A 548-amino-acid chain; its full sequence is Zinc metalloproteinase (548 aa).

An N-terminal signal peptide occupies residues Met-1 to Ala-28. Residue His-362 participates in Zn(2+) binding. The active site involves Glu-363. Zn(2+) is bound by residues His-366 and Glu-386. The interval Ser-440 to His-459 is disordered. Polar residues predominate over residues Trp-442–His-459. The active-site Proton donor is His-459.

This sequence belongs to the peptidase M4 family. Ca(2+) serves as cofactor. Requires Zn(2+) as cofactor.

The protein resides in the secreted. It localises to the cell wall. Zinc metalloprotease with hemolytic properties. This Renibacterium salmoninarum protein is Zinc metalloproteinase (hly).